A 348-amino-acid polypeptide reads, in one-letter code: Papaya proteinase 4 (348 aa).

The N-terminal stretch at 1-18 is a signal peptide; that stretch reads MAIICSFSKLLFVAICLF. Positions 19–132 are cleaved as a propeptide — activation peptide; the sequence is GHMSLSYCDF…EEFVNEDIVD (114 aa). Disulfide bonds link cysteine 154–cysteine 195, cysteine 188–cysteine 227, and cysteine 285–cysteine 336. Cysteine 157 is a catalytic residue. Residues histidine 291 and asparagine 311 contribute to the active site.

It belongs to the peptidase C1 family.

The enzyme catalyses Preferential cleavage: Gly-|-Xaa, in proteins and in small molecule substrates.. Its activity is regulated as follows. Not inhibited by cystatin. Functionally, thiol protease with a substrate specificity very different from the other thiol proteases. The chain is Papaya proteinase 4 from Carica papaya (Papaya).